Consider the following 449-residue polypeptide: Probable glycine dehydrogenase (decarboxylating) subunit 1 (449 aa).

Belongs to the GcvP family. N-terminal subunit subfamily. As to quaternary structure, the glycine cleavage system is composed of four proteins: P, T, L and H. In this organism, the P 'protein' is a heterodimer of two subunits.

It catalyses the reaction N(6)-[(R)-lipoyl]-L-lysyl-[glycine-cleavage complex H protein] + glycine + H(+) = N(6)-[(R)-S(8)-aminomethyldihydrolipoyl]-L-lysyl-[glycine-cleavage complex H protein] + CO2. In terms of biological role, the glycine cleavage system catalyzes the degradation of glycine. The P protein binds the alpha-amino group of glycine through its pyridoxal phosphate cofactor; CO(2) is released and the remaining methylamine moiety is then transferred to the lipoamide cofactor of the H protein. The protein is Probable glycine dehydrogenase (decarboxylating) subunit 1 of Solibacter usitatus (strain Ellin6076).